Reading from the N-terminus, the 197-residue chain is Protein Hikeshi (197 aa).

The tract at residues 18–55 (VAEDKFVFDLPDYESINHVVVFMLGTIPFPEGMGGSVY) is required for F-X-F-G repeats-nucleoporins recognition and nuclear import. Residues 124 to 134 (QTPVGNAAVSS) are flexible linker region involved in nuclear import of HSP70 proteins.

This sequence belongs to the OPI10 family. In terms of assembly, forms an asymmetric homodimer; required for binding and nuclear import of HSP70 proteins. Interacts with ATP-bound HSP70 proteins. Interacts with NUP62 and NUP153 (via F-X-F-G repeats). Interacts with HSPA8.

The protein localises to the cytoplasm. It localises to the cytosol. It is found in the nucleus. Functionally, acts as a specific nuclear import carrier for HSP70 proteins following heat-shock stress: acts by mediating the nucleoporin-dependent translocation of ATP-bound HSP70 proteins into the nucleus. HSP70 proteins import is required to protect cells from heat shock damages. Does not translocate ADP-bound HSP70 proteins into the nucleus. The sequence is that of Protein Hikeshi from Homo sapiens (Human).